Reading from the N-terminus, the 327-residue chain is MIQNQPHFYRGRFSVAPMLDWTTRHCRYFHRQFSQHALLYTEMVTTGAIIHAKYDHLEFSPAENPVALQLGGSDPTQLAQCAKIAQQRGYTEINLNVGCPSDRVQNGMFGACLMAKADLVADCVSAMQTEVSIPVTVKTRIGIDDLDSYEFLCEFVQKVHEAGCQEFIIHARKAWLSGLSPKENREIPPLDYERVYQLKRDFPHLLMSINGGIKTLEEMQQHLQYMDGVMVGREAYQNPSLLGYIDQALFDPTCPVVTPREAVEKMFPYIEQQLSQGVYLNHVVRHMLGAFQSCKGARQWRRYLSENAHKAGAGLEVVEKALSFVAS.

FMN-binding positions include 17-19 (PML) and Gln69. Residue Cys99 is the Proton donor of the active site. FMN-binding positions include Lys138, His170, 210-212 (NGG), and 232-233 (GR).

Belongs to the Dus family. DusA subfamily. It depends on FMN as a cofactor.

It carries out the reaction 5,6-dihydrouridine(20) in tRNA + NADP(+) = uridine(20) in tRNA + NADPH + H(+). The catalysed reaction is 5,6-dihydrouridine(20) in tRNA + NAD(+) = uridine(20) in tRNA + NADH + H(+). It catalyses the reaction 5,6-dihydrouridine(20a) in tRNA + NADP(+) = uridine(20a) in tRNA + NADPH + H(+). The enzyme catalyses 5,6-dihydrouridine(20a) in tRNA + NAD(+) = uridine(20a) in tRNA + NADH + H(+). Its function is as follows. Catalyzes the synthesis of 5,6-dihydrouridine (D), a modified base found in the D-loop of most tRNAs, via the reduction of the C5-C6 double bond in target uridines. Specifically modifies U20 and U20a in tRNAs. The protein is tRNA-dihydrouridine(20/20a) synthase of Pasteurella multocida (strain Pm70).